We begin with the raw amino-acid sequence, 213 residues long: Leucyl/phenylalanyl-tRNA--protein transferase (213 aa).

The protein belongs to the L/F-transferase family.

The protein resides in the cytoplasm. It catalyses the reaction N-terminal L-lysyl-[protein] + L-leucyl-tRNA(Leu) = N-terminal L-leucyl-L-lysyl-[protein] + tRNA(Leu) + H(+). It carries out the reaction N-terminal L-arginyl-[protein] + L-leucyl-tRNA(Leu) = N-terminal L-leucyl-L-arginyl-[protein] + tRNA(Leu) + H(+). The enzyme catalyses L-phenylalanyl-tRNA(Phe) + an N-terminal L-alpha-aminoacyl-[protein] = an N-terminal L-phenylalanyl-L-alpha-aminoacyl-[protein] + tRNA(Phe). Its function is as follows. Functions in the N-end rule pathway of protein degradation where it conjugates Leu, Phe and, less efficiently, Met from aminoacyl-tRNAs to the N-termini of proteins containing an N-terminal arginine or lysine. The polypeptide is Leucyl/phenylalanyl-tRNA--protein transferase (Campylobacter lari (strain RM2100 / D67 / ATCC BAA-1060)).